A 153-amino-acid polypeptide reads, in one-letter code: Xanthine-guanine phosphoribosyltransferase (153 aa).

Residues 37-38 and 89-97 contribute to the 5-phospho-alpha-D-ribose 1-diphosphate site; these read RG and DDLVDTGNT. Position 90 (Asp-90) interacts with Mg(2+). Residues Asp-93 and Ile-136 each contribute to the guanine site. Xanthine is bound by residues Asp-93 and Ile-136. GMP is bound by residues 93-97 and 135-136; these read DTGNT and WI.

Belongs to the purine/pyrimidine phosphoribosyltransferase family. XGPT subfamily. As to quaternary structure, homotetramer. It depends on Mg(2+) as a cofactor.

It localises to the cell inner membrane. It carries out the reaction GMP + diphosphate = guanine + 5-phospho-alpha-D-ribose 1-diphosphate. The enzyme catalyses XMP + diphosphate = xanthine + 5-phospho-alpha-D-ribose 1-diphosphate. The catalysed reaction is IMP + diphosphate = hypoxanthine + 5-phospho-alpha-D-ribose 1-diphosphate. Its pathway is purine metabolism; GMP biosynthesis via salvage pathway; GMP from guanine: step 1/1. It functions in the pathway purine metabolism; XMP biosynthesis via salvage pathway; XMP from xanthine: step 1/1. In terms of biological role, purine salvage pathway enzyme that catalyzes the transfer of the ribosyl-5-phosphate group from 5-phospho-alpha-D-ribose 1-diphosphate (PRPP) to the N9 position of the 6-oxopurines guanine and xanthine to form the corresponding ribonucleotides GMP (guanosine 5'-monophosphate) and XMP (xanthosine 5'-monophosphate), with the release of PPi. To a lesser extent, also acts on hypoxanthine. The protein is Xanthine-guanine phosphoribosyltransferase of Pasteurella multocida (strain Pm70).